A 655-amino-acid polypeptide reads, in one-letter code: Spastin (655 aa).

At 1-58 the chain is on the cytoplasmic side; sequence MLFDLINSFLKNGINNSNNNNNNNNNKNNFYNSLEDDDYLLNNQTTKVSLYLYFFIFA. The helical intramembrane region spans 59-79; that stretch reads FMFLVVDLIMLYYKHRENIES. The Cytoplasmic segment spans residues 80 to 655; the sequence is RETDLSLKLN…EKWNQKFGTI (576 aa). Residues 102–140 show a composition bias toward low complexity; that stretch reads KSSPTTSTTTTTITPTTTSSSQLRQPSTPKTTTKTINSP. Positions 102–151 are disordered; sequence KSSPTTSTTTTTITPTTTSSSQLRQPSTPKTTTKTINSPPSTPKSPPPLP. A compositionally biased stretch (pro residues) spans 141–151; sequence PSTPKSPPPLP. Residues 169-232 enclose the MIT domain; it reads LNEAKSQIDS…KRAEYLKNEL (64 aa). The disordered stretch occupies residues 261 to 325; sequence EQQQQQQQQS…TITSPGNKYG (65 aa). A compositionally biased stretch (low complexity) spans 262-320; sequence QQQQQQQQSSSTYRNSLNLSSSKSNSTINNRHSISSLSSLNSTTATTTTPSNTSTITSP. 424 to 431 serves as a coordination point for ATP; the sequence is GPPGNGKT.

Belongs to the AAA ATPase family. Spastin subfamily. As to quaternary structure, homohexamer. The homohexamer is stabilized by ATP-binding. The homohexamer may adopt a ring conformation through which microtubules pass prior to being severed. Interacts with microtubules.

The protein localises to the membrane. It is found in the cytoplasm. It localises to the cytoskeleton. Its subcellular location is the microtubule organizing center. The protein resides in the centrosome. The enzyme catalyses n ATP + n H2O + a microtubule = n ADP + n phosphate + (n+1) alpha/beta tubulin heterodimers.. In terms of biological role, ATP-dependent microtubule severing protein. Microtubule severing may promote reorganization of cellular microtubule arrays and the release of microtubules from the microtubule organizing center following nucleation. The protein is Spastin of Dictyostelium discoideum (Social amoeba).